We begin with the raw amino-acid sequence, 20 residues long: Snaclec ophioluxin subunit alpha (20 aa).

Cysteine 4 and cysteine 15 form a disulfide bridge. The C-type lectin domain maps to 11–20 (YDQHCYRIIN).

Belongs to the snaclec family. Heterodimer of subunits alpha and beta; disulfide-linked. As to expression, expressed by the venom gland.

The protein localises to the secreted. Functionally, binds to the platelet and collagen receptor glycoprotein VI (GP6) and activates platelet aggregation. The sequence is that of Snaclec ophioluxin subunit alpha from Ophiophagus hannah (King cobra).